We begin with the raw amino-acid sequence, 483 residues long: Glutathione reductase (483 aa).

Methionine 1 bears the N-acetylmethionine mark. Leucine 2 bears the N-acetylserine mark. Residues serine 33 and glycine 34 each contribute to the FAD site. Glutathione is bound at residue serine 33. Arginine 40 is a binding site for glutathione. Residues glutamate 53, threonine 60, cysteine 61, and lysine 69 each coordinate FAD. Cysteine 61 and cysteine 66 are disulfide-bonded. Tyrosine 123 contacts glutathione. Alanine 139 is a binding site for FAD. Positions 205, 208, 211, 228, and 234 each coordinate NADP(+). Threonine 243 is a binding site for glutathione. N-linked (GlcNAc...) asparagine glycosylation is present at asparagine 278. NADP(+) is bound at residue glycine 294. Residue aspartate 334 coordinates FAD. NADP(+) is bound at residue glutamate 340. Threonine 342 serves as a coordination point for FAD. Arginine 350 provides a ligand contact to glutathione. Valine 375 is a binding site for NADP(+). Lysine 425 provides a ligand contact to glutathione. Position 472 (histidine 472) interacts with FAD. The active-site Proton acceptor is histidine 472.

Belongs to the class-I pyridine nucleotide-disulfide oxidoreductase family. Homodimer. FAD serves as cofactor.

Its subcellular location is the cytoplasm. The protein localises to the nucleus. The protein resides in the mitochondrion. It localises to the peroxisome. It catalyses the reaction 2 glutathione + NADP(+) = glutathione disulfide + NADPH + H(+). Catalyzes the reduction of glutathione disulfide (GSSG) to reduced glutathione (GSH). Constitutes the major mechanism to maintain a high GSH:GSSG ratio in the cytosol. This Saccharomyces cerevisiae (strain ATCC 204508 / S288c) (Baker's yeast) protein is Glutathione reductase.